The primary structure comprises 910 residues: Adhesion G-protein coupled receptor F1 (910 aa).

The N-terminal stretch at 1–19 is a signal peptide; it reads MKVGVLWLISFFTFTDGHG. The Extracellular portion of the chain corresponds to 20–583; that stretch reads GFLGKNDGIK…SPFVPSTIFP (564 aa). Asn139, Asn168, Asn205, Asn282, Asn310, Asn317, Asn329, Asn354, Asn368, Asn389, Asn410, Asn423, Asn437, Asn455, Asn512, Asn528, and Asn553 each carry an N-linked (GlcNAc...) asparagine glycan. Positions 148–256 constitute an SEA domain; it reads ERTKIWGTFK…GSFRVFGKAQ (109 aa). 2 cysteine pairs are disulfide-bonded: Cys257–Cys287 and Cys275–Cys299. In terms of domain architecture, GAIN-B spans 437–579; the sequence is NKSQLKRGYS…SILMSPFVPS (143 aa). 2 disulfide bridges follow: Cys534/Cys561 and Cys549/Cys563. A GPS region spans residues 534-579; that stretch reads CVFWDFSHLQWNDAGCHLVNETQDIVTCQCTHLTSFSILMSPFVPS. Residues 568–576 are stachel; it reads SFSILMSPF. Residues 584–609 form a helical membrane-spanning segment; the sequence is VVKWITYVGLGISIGSLILCLIIEAL. Residues 610–621 lie on the Cytoplasmic side of the membrane; the sequence is FWKQIKKSQTSH. Residues 622–646 traverse the membrane as a helical segment; the sequence is TRRICMVNIALSLLIADVWFIVGAT. Over 647–658 the chain is Extracellular; the sequence is VDTTVNPSGVCT. Cys657 and Cys733 are oxidised to a cystine. The chain crosses the membrane as a helical span at residues 659–684; the sequence is AAVFFTHFFYLSLFFWMLMLGILLAY. Residues 685–696 are Cytoplasmic-facing; the sequence is RIILVFHHMAQH. Residues 697-719 traverse the membrane as a helical segment; it reads LMMAVGFCLGYGCPLIISVITIA. Topologically, residues 720–742 are extracellular; that stretch reads VTQPSNTYKRKDVCWLNWSNGSK. Asn736 and Asn739 each carry an N-linked (GlcNAc...) asparagine glycan. Residues 743–767 form a helical membrane-spanning segment; the sequence is PLLAFVVPALAIVAVNFVVVLLVLT. Over 768–784 the chain is Cytoplasmic; sequence KLWRPTVGERLSRDDKA. A helical membrane pass occupies residues 785–813; sequence TIIRVGKSLLILTPLLGLTWGFGIGTIVD. At 814–816 the chain is on the extracellular side; the sequence is SQN. Residues 817–842 form a helical membrane-spanning segment; the sequence is LAWHVIFALLNAFQGFFILCFGILLD. Over 843-910 the chain is Cytoplasmic; it reads SKLRQLLFNK…IMLTQFVSNE (68 aa).

This sequence belongs to the G-protein coupled receptor 2 family. Adhesion G-protein coupled receptor (ADGR) subfamily. As to quaternary structure, heterodimer of 2 chains generated by proteolytic processing; the large extracellular N-terminal fragment and the membrane-bound C-terminal fragment predominantly remain associated and non-covalently linked. Post-translationally, autoproteolytically processed at the GPS region of the GAIN-B domain; this cleavage modulates receptor activity. In terms of processing, glycosylated. Glycosylation at Asn-389 is required for secretion or folding. Mainly expressed in the kidney. Up-regulated in lung adenocarcinomas and prostate cancers.

The protein resides in the cell membrane. Its subcellular location is the secreted. Forms a heterodimer of 2 chains generated by proteolytic processing that remain associated through non-covalent interactions mediated by the GAIN-B domain. In the inactivated receptor, the Stachel sequence (also named stalk) is embedded in the GAIN-B domain, where it adopts a beta-strand conformation. On activation, the Stachel moves into the 7 transmembrane region and adopts a twisted hook-shaped configuration that forms contacts within the receptor, leading to coupling of a G-alpha protein, which activates signaling. The cleaved GAIN-B and N-terminal domains can then dissociate from the rest of the receptor. Its function is as follows. Adhesion G-protein coupled receptor (aGPCR) for N-docosahexaenoylethanolamine (synaptamide), an omega-3 fatty acid lipid highly enriched in the brain. Ligand binding causes a conformation change that triggers signaling via guanine nucleotide-binding proteins (G proteins) and modulates the activity of downstream effectors, such as adenylate cyclase. ADGRF1 is coupled to G(s) G proteins and mediates activation of adenylate cyclase activity. Also able to couple to G(q), G(i) and G(12)/G(13) G proteins; additional evidence is however required to confirm this result in vivo. Involved in the development of neurons and cognitive function. In liver, involved in fat accumulation. This is Adhesion G-protein coupled receptor F1 from Homo sapiens (Human).